A 286-amino-acid chain; its full sequence is Translocon-associated protein subunit alpha (286 aa).

The signal sequence occupies residues 1 to 20 (MSSLRRLLLLLLLVFPATLL). Over 21 to 207 (LRVGPGGSLA…EREDGLDGET (187 aa)) the chain is Lumenal. Residues 37–75 (EDEETVEDSIIEDEDDEAEVEEDEPTDLAEDKEEDDVSG) show a composition bias toward acidic residues. Residues 37 to 83 (EDEETVEDSIIEDEDDEAEVEEDEPTDLAEDKEEDDVSGEPEASPSA) form a disordered region. N-linked (GlcNAc...) asparagine glycans are attached at residues Asn136 and Asn191. The chain crosses the membrane as a helical span at residues 208 to 228 (IFMYMFLAGLGLLVVVGLHQL). Topologically, residues 229-286 (LESRKRKRPIQKVEMGTSSQNDVDMSWIPQETLNQINKASPRRLPRKRAQKRSVGSDE) are cytoplasmic. A Phosphoserine modification is found at Ser247. Thr260 bears the Phosphothreonine mark. The tract at residues 261-286 (LNQINKASPRRLPRKRAQKRSVGSDE) is disordered. The residue at position 268 (Ser268) is a Phosphoserine. The segment covering 268 to 279 (SPRRLPRKRAQK) has biased composition (basic residues).

It belongs to the TRAP-alpha family. In terms of assembly, heterotetramer of TRAP-alpha, TRAP-beta, TRAP-delta and TRAP-gamma. Interacts with palmitoylated calnexin (CALX), the interaction is required for efficient folding of glycosylated proteins. In terms of processing, phosphorylated in its cytoplasmic tail.

It localises to the endoplasmic reticulum membrane. TRAP proteins are part of a complex whose function is to bind calcium to the ER membrane and thereby regulate the retention of ER resident proteins. May be involved in the recycling of the translocation apparatus after completion of the translocation process or may function as a membrane-bound chaperone facilitating folding of translocated proteins. The chain is Translocon-associated protein subunit alpha (SSR1) from Bos taurus (Bovine).